A 179-amino-acid chain; its full sequence is ATP synthase subunit delta (179 aa).

Belongs to the ATPase delta chain family. F-type ATPases have 2 components, F(1) - the catalytic core - and F(0) - the membrane proton channel. F(1) has five subunits: alpha(3), beta(3), gamma(1), delta(1), epsilon(1). F(0) has three main subunits: a(1), b(2) and c(10-14). The alpha and beta chains form an alternating ring which encloses part of the gamma chain. F(1) is attached to F(0) by a central stalk formed by the gamma and epsilon chains, while a peripheral stalk is formed by the delta and b chains.

It is found in the cell inner membrane. Its function is as follows. F(1)F(0) ATP synthase produces ATP from ADP in the presence of a proton or sodium gradient. F-type ATPases consist of two structural domains, F(1) containing the extramembraneous catalytic core and F(0) containing the membrane proton channel, linked together by a central stalk and a peripheral stalk. During catalysis, ATP synthesis in the catalytic domain of F(1) is coupled via a rotary mechanism of the central stalk subunits to proton translocation. This protein is part of the stalk that links CF(0) to CF(1). It either transmits conformational changes from CF(0) to CF(1) or is implicated in proton conduction. The polypeptide is ATP synthase subunit delta (Paraburkholderia xenovorans (strain LB400)).